The chain runs to 557 residues: Urocanate hydratase (557 aa).

NAD(+) is bound by residues glycine 53–glycine 54, glutamine 131, glycine 177–glycine 179, glutamate 197, arginine 202, asparagine 243–alanine 244, glutamine 264–histidine 268, tyrosine 274–leucine 275, and tyrosine 323. Cysteine 411 is an active-site residue. The segment at leucine 445–serine 464 is disordered. The segment covering arginine 455–serine 464 has biased composition (basic and acidic residues). NAD(+) is bound at residue glycine 493.

The protein belongs to the urocanase family. It depends on NAD(+) as a cofactor.

The protein localises to the cytoplasm. The catalysed reaction is 4-imidazolone-5-propanoate = trans-urocanate + H2O. Its pathway is amino-acid degradation; L-histidine degradation into L-glutamate; N-formimidoyl-L-glutamate from L-histidine: step 2/3. In terms of biological role, catalyzes the conversion of urocanate to 4-imidazolone-5-propionate. The polypeptide is Urocanate hydratase (Pseudomonas putida (strain W619)).